The following is a 635-amino-acid chain: MLRAINQNSAKVVKSLKQQLVVLEATNVVAYTGTKSFTTTKTFNNTQTKPKIFTSSNVLSFSSPSSSNVFSEILNKRSYSSKGKEITMPALSPSMTEGNIVQWKKKEGDQIKAGDVIAEVETDKATMDFQYEDGNGYLAKILIPEGTKGIEINKPIAIIVSKKEDIESAVKNYKPSSQASSTPVQEEAPKPKQEAPKKSTKTYPAHKVVGMPALSPSMETGGIASWTKKEGDQIKAGDAIAEVETDKATMDFQYEDGNGYLAKILVPGGTSGIQINQPVCIIVKNKEDCDKFADYSVEEQSSSSSSSSQESTPSSSSSSSQESTPSQSSSQQTTRKSGERIFATPAARFEASSKGYDLSAINGTGPNNRILKADVLEFVPQKQEVAQQQQQQTTTTTKKPTTPTSSGEFTDIPHSNIRKVTAARLTESKQTIPHYYLTMECRVDKLLKLRSELNAMNTVKISVNDFIVKASAAALRDNPVVNSTWTDQFIRRYHNIDINVAVNTPQGLFTPIVRGVDMKGLNSISTSVKQLAEKAQNGKLHPSEFESGTFTISNLGMLGIKQFAAVINPPQAAILAVGTTETRVVLSNKPDSPYETATILSVTLSCDHRVIDGAVGAEWLKSFKDYVENPIKLIL.

Residues 83-160 (GKEITMPALS…EINKPIAIIV (78 aa)) form the Lipoyl-binding 1 domain. Lysine 124 bears the N6-lipoyllysine mark. The segment at 171–204 (KNYKPSSQASSTPVQEEAPKPKQEAPKKSTKTYP) is disordered. Polar residues predominate over residues 174–184 (KPSSQASSTPV). Over residues 187–197 (EAPKPKQEAPK) the composition is skewed to basic and acidic residues. The Lipoyl-binding 2 domain occupies 206 to 283 (HKVVGMPALS…QINQPVCIIV (78 aa)). N6-lipoyllysine is present on lysine 247. The tract at residues 295–338 (YSVEEQSSSSSSSSQESTPSSSSSSSQESTPSQSSSQQTTRKSG) is disordered. A compositionally biased stretch (low complexity) spans 298-334 (EEQSSSSSSSSQESTPSSSSSSSQESTPSQSSSQQTT). Residues 342–379 (FATPAARFEASSKGYDLSAINGTGPNNRILKADVLEFV) form the Peripheral subunit-binding (PSBD) domain. A disordered region spans residues 382–413 (KQEVAQQQQQQTTTTTKKPTTPTSSGEFTDIP). A compositionally biased stretch (low complexity) spans 387–404 (QQQQQQTTTTTKKPTTPT). The catalytic stretch occupies residues 403 to 635 (PTSSGEFTDI…YVENPIKLIL (233 aa)).

The protein belongs to the 2-oxoacid dehydrogenase family. As to quaternary structure, 20 to 30 alpha(2)-beta(2) tetramers of E1 + 6 homodimers of E3 + 60 copies of E2. The cofactor is (R)-lipoate.

The protein localises to the mitochondrion matrix. It catalyses the reaction N(6)-[(R)-dihydrolipoyl]-L-lysyl-[protein] + acetyl-CoA = N(6)-[(R)-S(8)-acetyldihydrolipoyl]-L-lysyl-[protein] + CoA. The pyruvate dehydrogenase complex catalyzes the overall conversion of pyruvate to acetyl-CoA and CO(2). It contains multiple copies of three enzymatic components: pyruvate dehydrogenase (E1), dihydrolipoamide acetyltransferase (E2) and lipoamide dehydrogenase (E3). In Dictyostelium discoideum (Social amoeba), this protein is Dihydrolipoyllysine-residue acetyltransferase component of pyruvate dehydrogenase complex, mitochondrial (pdhC).